The following is a 330-amino-acid chain: Malate dehydrogenase (330 aa).

Position 12–18 (Gly12–Gly18) interacts with NAD(+). 2 residues coordinate substrate: Arg93 and Arg99. Residues Asn106, Gln113, and Val130–Asn132 contribute to the NAD(+) site. The substrate site is built by Asn132 and Arg166. The active-site Proton acceptor is His191.

This sequence belongs to the LDH/MDH superfamily. MDH type 2 family.

It catalyses the reaction (S)-malate + NAD(+) = oxaloacetate + NADH + H(+). Its function is as follows. Catalyzes the reversible oxidation of malate to oxaloacetate. The protein is Malate dehydrogenase of Azoarcus sp. (strain BH72).